The primary structure comprises 325 residues: Diacylglycerol acyltransferase/mycolyltransferase Ag85B (325 aa).

Residues Met-1–Ala-40 form the signal peptide. Leu-82–Arg-83 provides a ligand contact to substrate. The segment at Phe-98–Val-108 is fibronectin-binding. Cys-127 and Cys-132 are disulfide-bonded. Ser-166 and Asp-194 together coordinate substrate. Residue Ser-166 is the Nucleophile of the active site. Residue Glu-270 is part of the active site. Substrate is bound by residues Phe-272–Ser-275, Lys-279, and His-302–Trp-304. His-302 is an active-site residue.

Belongs to the mycobacterial A85 antigen family.

The protein resides in the secreted. The enzyme catalyses 2 alpha,alpha'-trehalose 6-mycolate = alpha,alpha'-trehalose 6,6'-bismycolate + alpha,alpha-trehalose. It carries out the reaction an acyl-CoA + a 1,2-diacyl-sn-glycerol = a triacyl-sn-glycerol + CoA. Functionally, the antigen 85 proteins (FbpA, FbpB, FbpC) are responsible for the high affinity of mycobacteria for fibronectin, a large adhesive glycoprotein, which facilitates the attachment of M.tuberculosis to murine alveolar macrophages (AMs). They also help to maintain the integrity of the cell wall by catalyzing the transfer of mycolic acids to cell wall arabinogalactan and through the synthesis of alpha,alpha-trehalose dimycolate (TDM, cord factor). They catalyze the transfer of a mycoloyl residue from one molecule of alpha,alpha-trehalose monomycolate (TMM) to another TMM, leading to the formation of TDM. This chain is Diacylglycerol acyltransferase/mycolyltransferase Ag85B (fbpB), found in Mycobacterium kansasii.